The primary structure comprises 472 residues: Fumarate hydratase class II (472 aa).

A disordered region spans residues 1 to 20 (MSPHENPSVETRTESDTFGP). Substrate contacts are provided by residues 105 to 107 (SGT), 136 to 139 (HPND), 146 to 148 (SSN), and Thr194. A disordered region spans residues 127 to 149 (GKRGGKSPVHPNDHCNRGQSSND). His195 (proton donor/acceptor) is an active-site residue. Ser325 is a catalytic residue. Substrate is bound by residues Ser326 and 331-333 (KVN).

This sequence belongs to the class-II fumarase/aspartase family. Fumarase subfamily. In terms of assembly, homotetramer.

It localises to the cytoplasm. It carries out the reaction (S)-malate = fumarate + H2O. Its pathway is carbohydrate metabolism; tricarboxylic acid cycle; (S)-malate from fumarate: step 1/1. Its function is as follows. Involved in the TCA cycle. Catalyzes the stereospecific interconversion of fumarate to L-malate. The sequence is that of Fumarate hydratase class II from Methylorubrum extorquens (strain ATCC 14718 / DSM 1338 / JCM 2805 / NCIMB 9133 / AM1) (Methylobacterium extorquens).